The following is a 154-amino-acid chain: uncharacterized protein (154 aa).

This is an uncharacterized protein from Bacillus subtilis (strain 168).